Consider the following 196-residue polypeptide: Small ribosomal subunit protein uS4c (196 aa).

Positions 89 to 150 (MRLDNIVFRL…NQRSKRLVQN (62 aa)) constitute an S4 RNA-binding domain.

Belongs to the universal ribosomal protein uS4 family. As to quaternary structure, part of the 30S ribosomal subunit. Contacts protein S5. The interaction surface between S4 and S5 is involved in control of translational fidelity.

The protein localises to the plastid. Its subcellular location is the chloroplast. Functionally, one of the primary rRNA binding proteins, it binds directly to 16S rRNA where it nucleates assembly of the body of the 30S subunit. In terms of biological role, with S5 and S12 plays an important role in translational accuracy. The polypeptide is Small ribosomal subunit protein uS4c (rps4) (Eleusine indica (Goosegrass)).